Consider the following 82-residue polypeptide: NADH-ubiquinone oxidoreductase 9.5 kDa subunit (82 aa).

Residues 25–43 (AYFYSCVIAGLGPVFLTVV) form a helical membrane-spanning segment.

This sequence belongs to the complex I NDUFA3 subunit family. As to quaternary structure, complex I is composed of about 40 different subunits.

The protein localises to the mitochondrion inner membrane. Its function is as follows. Accessory subunit of the mitochondrial membrane respiratory chain NADH dehydrogenase (Complex I), that is believed not to be involved in catalysis. Complex I functions in the transfer of electrons from NADH to the respiratory chain. The immediate electron acceptor for the enzyme is believed to be ubiquinone. This subunit binds ubiquinone. The sequence is that of NADH-ubiquinone oxidoreductase 9.5 kDa subunit (nuo9.5) from Neurospora crassa (strain ATCC 24698 / 74-OR23-1A / CBS 708.71 / DSM 1257 / FGSC 987).